Reading from the N-terminus, the 132-residue chain is Large ribosomal subunit protein uL14 (132 aa).

The protein belongs to the universal ribosomal protein uL14 family. In terms of assembly, part of the 50S ribosomal subunit. Forms a cluster with proteins L3 and L24e, part of which may contact the 16S rRNA in 2 intersubunit bridges.

In terms of biological role, binds to 23S rRNA. Forms part of two intersubunit bridges in the 70S ribosome. The sequence is that of Large ribosomal subunit protein uL14 from Methanococcus vannielii.